A 400-amino-acid polypeptide reads, in one-letter code: Phosphoglycerate kinase (400 aa).

Substrate contacts are provided by residues 23–25, Arg38, 61–64, Arg120, and Arg153; these read DLN and HFGR. Residues Lys203, Glu325, and 355–358 contribute to the ATP site; that span reads GGDT.

The protein belongs to the phosphoglycerate kinase family. In terms of assembly, monomer.

It is found in the cytoplasm. It carries out the reaction (2R)-3-phosphoglycerate + ATP = (2R)-3-phospho-glyceroyl phosphate + ADP. It participates in carbohydrate degradation; glycolysis; pyruvate from D-glyceraldehyde 3-phosphate: step 2/5. This chain is Phosphoglycerate kinase, found in Agrobacterium fabrum (strain C58 / ATCC 33970) (Agrobacterium tumefaciens (strain C58)).